A 206-amino-acid polypeptide reads, in one-letter code: Cytidylate kinase (206 aa).

An ATP-binding site is contributed by Gly7–Ser15.

It belongs to the cytidylate kinase family. Type 1 subfamily.

It is found in the cytoplasm. The enzyme catalyses CMP + ATP = CDP + ADP. It carries out the reaction dCMP + ATP = dCDP + ADP. This is Cytidylate kinase from Deinococcus radiodurans (strain ATCC 13939 / DSM 20539 / JCM 16871 / CCUG 27074 / LMG 4051 / NBRC 15346 / NCIMB 9279 / VKM B-1422 / R1).